Here is an 811-residue protein sequence, read N- to C-terminus: G-type lectin S-receptor-like serine/threonine-protein kinase LECRK2 (811 aa).

Residues 1–23 (MAPLLFLPILQLLLLYCTKSAQA) form the signal peptide. The Bulb-type lectin domain occupies 24 to 153 (QLNISIGSSL…DGATKWESFG (130 aa)). Residues 24–464 (QLNISIGSSL…DKKYWILGSS (441 aa)) are Extracellular-facing. 7 N-linked (GlcNAc...) asparagine glycosylation sites follow: Asn-26, Asn-39, Asn-59, Asn-219, Asn-226, Asn-237, and Asn-242. One can recognise an EGF-like; atypical domain in the interval 292–344 (PENICQTIQTKVGSGACGFNSYCTFDGTKNTTNCLCPQRYKFFDNERTYKGCR). Disulfide bonds link Cys-296-Cys-314, Cys-308-Cys-325, Cys-327-Cys-343, Cys-389-Cys-411, and Cys-393-Cys-399. N-linked (GlcNAc...) asparagine glycosylation is present at Asn-321. In terms of domain architecture, PAN spans 352-436 (CDLDETAAMV…LQATVLLKVP (85 aa)). Residues 465–485 (LFFGSSVLVNFLLIFVLLFGT) form a helical membrane-spanning segment. Topologically, residues 486-811 (YCSITSRKKT…DPSSYISSLA (326 aa)) are cytoplasmic. Positions 521–795 (GGFHEVLGTG…KVMQMLDGAV (275 aa)) constitute a Protein kinase domain. ATP contacts are provided by residues 527 to 535 (LGTGASGIV) and Lys-551. The active-site Proton acceptor is Asp-645.

It belongs to the protein kinase superfamily. Ser/Thr protein kinase family.

Its subcellular location is the membrane. The catalysed reaction is L-seryl-[protein] + ATP = O-phospho-L-seryl-[protein] + ADP + H(+). It carries out the reaction L-threonyl-[protein] + ATP = O-phospho-L-threonyl-[protein] + ADP + H(+). Its function is as follows. Involved in resistance against the herbivorous insect brown planthopper (N.lugens, BPH). Member of the BPH3 (BPH resistance locus 3) cluster which contains LECRK1, LECRK2 and LECRK3. This Oryza sativa subsp. japonica (Rice) protein is G-type lectin S-receptor-like serine/threonine-protein kinase LECRK2.